Reading from the N-terminus, the 370-residue chain is L-lactate oxidase (370 aa).

The FMN hydroxy acid dehydrogenase domain maps to 8 to 367 (DPDGMPVTLS…TPDLLTGFSG (360 aa)). Tyrosine 34 serves as a coordination point for pyruvate. FMN contacts are provided by residues 87 to 89 (PMA), serine 116, and glutamine 136. Tyrosine 138 lines the pyruvate pocket. Threonine 164 is a binding site for FMN. Residue arginine 173 coordinates pyruvate. FMN is bound by residues lysine 238 and serine 260. Residues histidine 262 and arginine 265 each coordinate pyruvate. The active-site Proton acceptor is histidine 262. FMN is bound by residues 293 to 297 (DGGIR) and arginine 317.

It belongs to the FMN-dependent alpha-hydroxy acid dehydrogenase family. As to quaternary structure, homotetramer. FMN is required as a cofactor.

The catalysed reaction is (S)-lactate + O2 = pyruvate + H2O2. It catalyses the reaction a (2S)-2-hydroxycarboxylate + O2 = a 2-oxocarboxylate + H2O2. The enzyme catalyses glycolate + O2 = glyoxylate + H2O2. It carries out the reaction 2-hydroxyoctadecanoate + O2 = 2-oxooctadecanoate + H2O2. In terms of biological role, catalyzes the oxidation of (S)-lactate (L-lactate) to pyruvate, with a reduction of O2 to H2O2. Is also able to use glycolate and to a lesser extent 2-hydroxyoctadecanoate as substrate. This is L-lactate oxidase from Roseobacter sp. (strain GAI101).